A 51-amino-acid polypeptide reads, in one-letter code: MARNKPLGRKLRLARALKSNRAIPVWVVIRTSRRIRFNLLRRHWRRSKLKV.

It belongs to the eukaryotic ribosomal protein eL39 family.

The polypeptide is Large ribosomal subunit protein eL39 (rpl39e) (Aeropyrum pernix (strain ATCC 700893 / DSM 11879 / JCM 9820 / NBRC 100138 / K1)).